A 343-amino-acid chain; its full sequence is Phosphate acyltransferase (343 aa).

The protein belongs to the PlsX family. In terms of assembly, homodimer. Probably interacts with PlsY.

The protein localises to the cytoplasm. It carries out the reaction a fatty acyl-[ACP] + phosphate = an acyl phosphate + holo-[ACP]. It participates in lipid metabolism; phospholipid metabolism. Functionally, catalyzes the reversible formation of acyl-phosphate (acyl-PO(4)) from acyl-[acyl-carrier-protein] (acyl-ACP). This enzyme utilizes acyl-ACP as fatty acyl donor, but not acyl-CoA. This chain is Phosphate acyltransferase, found in Halorhodospira halophila (strain DSM 244 / SL1) (Ectothiorhodospira halophila (strain DSM 244 / SL1)).